A 120-amino-acid polypeptide reads, in one-letter code: C-C motif chemokine 23 (120 aa).

The N-terminal stretch at 1–21 (MKVSVAALSCLMLVTALGSQA) is a signal peptide. 3 disulfide bridges follow: C54–C78, C55–C94, and C65–C105.

Belongs to the intercrine beta (chemokine CC) family. Post-translationally, the N-terminal is proteolytically cleaved by proteases associated with inflammatory responses. The processed forms, CCL23(19-99), CCL23(22-99), CCL23(27-99) and CCL23(30-99) exhibit increase in CCR1-mediated signaling and chemotaxis assays in vitro. High levels in adult lung, liver, skeletal muscle and pancreas. Moderate levels in fetal liver, adult bone marrow and placenta. The short form is the major species and the longer form was detected only in very low abundance. CCL23(19-99), CCL23(22-99), CCL23(27-99), CCL23(30-99) are found in high levels in synovial fluids from rheumatoid patients.

Its subcellular location is the secreted. In terms of biological role, shows chemotactic activity for monocytes, resting T-lymphocytes, and neutrophils, but not for activated lymphocytes. Inhibits proliferation of myeloid progenitor cells in colony formation assays. This protein can bind heparin. Binds CCR1. CCL23(19-99), CCL23(22-99), CCL23(27-99), CCL23(30-99) are more potent chemoattractants than CCL23. The chain is C-C motif chemokine 23 (CCL23) from Homo sapiens (Human).